Consider the following 255-residue polypeptide: Glycine-rich protein DOT1 (255 aa).

The N-terminal stretch at 1 to 21 is a signal peptide; sequence MANHKNLFFLCFLIGLGLCSA. Residues 63–88 are disordered; that stretch reads GGGSGEGGGAGGHGEGHIGGGGGGGH.

As to expression, expressed in emerging leaf primordia and young leaves.

The protein resides in the secreted. Involved in leaf vasculature patterning. The protein is Glycine-rich protein DOT1 of Arabidopsis thaliana (Mouse-ear cress).